The sequence spans 145 residues: MLSIIQRVNCAKVVVDNQKVADINKGILALVCVEKEDTQQNFEKMADKIIKYRIFEDDAGKMNLSLVDIDAEIILVPQFTLAADTKKGNRPSFSSGCPPEIAKEKFKEFENIFRRKYNKVQTGIFGADMKVSLTNDGPVTFSFKI.

The Gly-cisPro motif, important for rejection of L-amino acids motif lies at Gly137 to Pro138.

It belongs to the DTD family. In terms of assembly, homodimer.

The protein resides in the cytoplasm. It catalyses the reaction glycyl-tRNA(Ala) + H2O = tRNA(Ala) + glycine + H(+). It carries out the reaction a D-aminoacyl-tRNA + H2O = a tRNA + a D-alpha-amino acid + H(+). In terms of biological role, an aminoacyl-tRNA editing enzyme that deacylates mischarged D-aminoacyl-tRNAs. Also deacylates mischarged glycyl-tRNA(Ala), protecting cells against glycine mischarging by AlaRS. Acts via tRNA-based rather than protein-based catalysis; rejects L-amino acids rather than detecting D-amino acids in the active site. By recycling D-aminoacyl-tRNA to D-amino acids and free tRNA molecules, this enzyme counteracts the toxicity associated with the formation of D-aminoacyl-tRNA entities in vivo and helps enforce protein L-homochirality. This Francisella tularensis subsp. holarctica (strain LVS) protein is D-aminoacyl-tRNA deacylase.